Here is a 145-residue protein sequence, read N- to C-terminus: Large ribosomal subunit protein uL15 (145 aa).

The tract at residues Met1 to Glu50 is disordered. The segment covering Arg20–Ser30 has biased composition (gly residues).

Belongs to the universal ribosomal protein uL15 family. Part of the 50S ribosomal subunit.

In terms of biological role, binds to the 23S rRNA. This Aster yellows witches'-broom phytoplasma (strain AYWB) protein is Large ribosomal subunit protein uL15.